The chain runs to 295 residues: Phosphoribosylaminoimidazole-succinocarboxamide synthase (295 aa).

Belongs to the SAICAR synthetase family.

It catalyses the reaction 5-amino-1-(5-phospho-D-ribosyl)imidazole-4-carboxylate + L-aspartate + ATP = (2S)-2-[5-amino-1-(5-phospho-beta-D-ribosyl)imidazole-4-carboxamido]succinate + ADP + phosphate + 2 H(+). Its pathway is purine metabolism; IMP biosynthesis via de novo pathway; 5-amino-1-(5-phospho-D-ribosyl)imidazole-4-carboxamide from 5-amino-1-(5-phospho-D-ribosyl)imidazole-4-carboxylate: step 1/2. In Nitrosomonas europaea (strain ATCC 19718 / CIP 103999 / KCTC 2705 / NBRC 14298), this protein is Phosphoribosylaminoimidazole-succinocarboxamide synthase.